Consider the following 499-residue polypeptide: MDNMNHEELNDQLLVRREKLHNLREQGIDPFGKRFERTHSSKELLNLYGEFSKEELEEKAISVSIAGRIMTKRGKGKAGFAHIQDLHGQVQIYVRKDAVGDEEYELFKTADLGDLVGIEGKVFKTNVGELSVKATSFTLLTKSLRPLPDKYHGLKDIEQRYRQRYLDLITSMESRETFVTRSKIIREMRRYLDDNGYLEVETPMMHTIAGGASARPFITHHNALDMELYMRIAIELHLKRLIVGGLEKVYEIGRVFRNEGVSTRHNPEFTMIELYEAYADYKDIMKLTENMIAHIAKRVLGTTTIQYGEHEINLEPEWTRLHMVDAIKQYCGVDFWKPMSVEEARALAKEHDVEIKDTMEVGHIINEFFEQKVEEKLIQPTFIYGHPVEISPLAKKNDEDSRFTDRFELFIVAREHANAFTELNDPIDQKERFEAQLKEREQGNDEAHMMDDDYIEALEYGMPPTGGLGIGIDRLVMLLTNSPSIRDVLLFPTMRHKQD.

Mg(2+) contacts are provided by E408 and E415.

Belongs to the class-II aminoacyl-tRNA synthetase family. As to quaternary structure, homodimer. Mg(2+) serves as cofactor.

The protein localises to the cytoplasm. It carries out the reaction tRNA(Lys) + L-lysine + ATP = L-lysyl-tRNA(Lys) + AMP + diphosphate. The chain is Lysine--tRNA ligase from Bacillus cytotoxicus (strain DSM 22905 / CIP 110041 / 391-98 / NVH 391-98).